The chain runs to 306 residues: Curved DNA-binding protein (306 aa).

A J domain is found at 5–69 (DYYAIMGVKP…QRRAEYDQLW (65 aa)).

It is found in the cytoplasm. The protein resides in the nucleoid. DNA-binding protein that preferentially recognizes a curved DNA sequence. It is probably a functional analog of DnaJ; displays overlapping activities with DnaJ, but functions under different conditions, probably acting as a molecular chaperone in an adaptive response to environmental stresses other than heat shock. Lacks autonomous chaperone activity; binds native substrates and targets them for recognition by DnaK. Its activity is inhibited by the binding of CbpM. This chain is Curved DNA-binding protein, found in Salmonella paratyphi A (strain ATCC 9150 / SARB42).